The sequence spans 242 residues: UPF0309 protein BMEA_B0892 (242 aa).

Residues 30–214 (AADLIAAAAR…ARLVGEGDAP (185 aa)) form the SIS domain.

Belongs to the UPF0309 family.

The chain is UPF0309 protein BMEA_B0892 from Brucella melitensis biotype 2 (strain ATCC 23457).